We begin with the raw amino-acid sequence, 356 residues long: DNA polymerase IV (356 aa).

The 182-residue stretch at 6-187 folds into the UmuC domain; the sequence is IIHIDMDYFF…LDIGDFPGVG (182 aa). Mg(2+) contacts are provided by aspartate 10 and aspartate 105. The active site involves glutamate 106.

The protein belongs to the DNA polymerase type-Y family. In terms of assembly, monomer. The cofactor is Mg(2+).

The protein localises to the cytoplasm. It catalyses the reaction DNA(n) + a 2'-deoxyribonucleoside 5'-triphosphate = DNA(n+1) + diphosphate. In terms of biological role, poorly processive, error-prone DNA polymerase involved in untargeted mutagenesis. Copies undamaged DNA at stalled replication forks, which arise in vivo from mismatched or misaligned primer ends. These misaligned primers can be extended by PolIV. Exhibits no 3'-5' exonuclease (proofreading) activity. May be involved in translesional synthesis, in conjunction with the beta clamp from PolIII. The sequence is that of DNA polymerase IV from Staphylococcus aureus (strain COL).